We begin with the raw amino-acid sequence, 338 residues long: Putative clathrin assembly protein At5g10410 (338 aa).

The 131-residue stretch at 27 to 157 (FGSTAVKYIH…WVPKVLGSFP (131 aa)) folds into the ENTH domain.

The protein resides in the membrane. The protein localises to the clathrin-coated pit. It localises to the golgi apparatus. It is found in the cytoplasmic vesicle. Its subcellular location is the clathrin-coated vesicle. This chain is Putative clathrin assembly protein At5g10410, found in Arabidopsis thaliana (Mouse-ear cress).